A 79-amino-acid polypeptide reads, in one-letter code: Putative antitoxin MM_2475 (79 aa).

It belongs to the UPF0330 family.

In terms of biological role, possibly the antitoxin component of a type II toxin-antitoxin (TA) system. In Methanosarcina mazei (strain ATCC BAA-159 / DSM 3647 / Goe1 / Go1 / JCM 11833 / OCM 88) (Methanosarcina frisia), this protein is Putative antitoxin MM_2475.